Consider the following 365-residue polypeptide: Protein Wnt-6 (365 aa).

The first 24 residues, 1–24, serve as a signal peptide directing secretion; it reads MLPPLPSRLGLLLLLLLCPAHVGG. 11 disulfide bridges follow: cysteine 76-cysteine 87, cysteine 124-cysteine 132, cysteine 134-cysteine 172, cysteine 222-cysteine 236, cysteine 224-cysteine 231, cysteine 294-cysteine 325, cysteine 310-cysteine 320, cysteine 324-cysteine 364, cysteine 340-cysteine 355, cysteine 342-cysteine 352, and cysteine 347-cysteine 348. The N-linked (GlcNAc...) asparagine glycan is linked to asparagine 86. Residues 140-158 show a composition bias toward pro residues; it reads RAPPRPSGLPGTPGPPGPA. Residues 140–164 form a disordered region; it reads RAPPRPSGLPGTPGPPGPAGSPEGS. Serine 228 carries O-palmitoleoyl serine; by PORCN lipidation. N-linked (GlcNAc...) asparagine glycosylation occurs at asparagine 311.

Belongs to the Wnt family. Interacts with PORCN. Post-translationally, palmitoleoylation is required for efficient binding to frizzled receptors. Depalmitoleoylation leads to Wnt signaling pathway inhibition. In terms of tissue distribution, expressed in gastric cancer cell lines and gastric cancer tissues (at protein level). Detected in the apical gland region of the gastric foveolar epithelium (at protein level).

It is found in the secreted. It localises to the extracellular space. The protein localises to the extracellular matrix. In terms of biological role, ligand for members of the frizzled family of seven transmembrane receptors. Probable developmental protein. May be a signaling molecule which affects the development of discrete regions of tissues. Is likely to signal over only few cell diameters. Together with CAV1 may promote chemoresistance of gastric cancer cells to DNA-damaging anthracycline drugs through the activation of the canonical Wnt receptor signaling pathway. In Homo sapiens (Human), this protein is Protein Wnt-6 (WNT6).